The chain runs to 909 residues: Protein translocase subunit SecA (909 aa).

Residues Q87, 105 to 109, and D507 contribute to the ATP site; that span reads GEGKT. Positions 857–909 are disordered; that stretch reads DTHSELAEEQPPVAENRENKQQPFVRKNEKVGRNDPCPCGSGKKYKQCHGKLN. The segment covering 871–889 has biased composition (basic and acidic residues); the sequence is ENRENKQQPFVRKNEKVGR. The Zn(2+) site is built by C893, C895, C904, and H905. A compositionally biased stretch (basic residues) spans 899–909; the sequence is KKYKQCHGKLN.

Belongs to the SecA family. In terms of assembly, monomer and homodimer. Part of the essential Sec protein translocation apparatus which comprises SecA, SecYEG and auxiliary proteins SecDF-YajC and YidC. Zn(2+) is required as a cofactor.

It is found in the cell inner membrane. The protein localises to the cytoplasm. The enzyme catalyses ATP + H2O + cellular proteinSide 1 = ADP + phosphate + cellular proteinSide 2.. Functionally, part of the Sec protein translocase complex. Interacts with the SecYEG preprotein conducting channel. Has a central role in coupling the hydrolysis of ATP to the transfer of proteins into and across the cell membrane, serving both as a receptor for the preprotein-SecB complex and as an ATP-driven molecular motor driving the stepwise translocation of polypeptide chains across the membrane. The sequence is that of Protein translocase subunit SecA from Nitrosomonas europaea (strain ATCC 19718 / CIP 103999 / KCTC 2705 / NBRC 14298).